A 163-amino-acid polypeptide reads, in one-letter code: Transcription elongation factor GreB (163 aa).

A coiled-coil region spans residues 54–76 (GKRRMREIDRRIRFLTKRLEAAV).

This sequence belongs to the GreA/GreB family. GreB subfamily.

Functionally, necessary for efficient RNA polymerase transcription elongation past template-encoded arresting sites. The arresting sites in DNA have the property of trapping a certain fraction of elongating RNA polymerases that pass through, resulting in locked ternary complexes. Cleavage of the nascent transcript by cleavage factors such as GreA or GreB allows the resumption of elongation from the new 3'terminus. GreB releases sequences of up to 9 nucleotides in length. The sequence is that of Transcription elongation factor GreB from Neisseria meningitidis serogroup B (strain ATCC BAA-335 / MC58).